We begin with the raw amino-acid sequence, 122 residues long: Modulator protein MzrA (122 aa).

Topologically, residues 1–10 (MKILTRIPRR) are cytoplasmic. Residues 11–31 (LLPWLLGGALALVAVSFAPAL) traverse the membrane as a helical segment. Residues 32-122 (LSHETVVQIR…NQDANRSIYS (91 aa)) are Periplasmic-facing.

This sequence belongs to the MzrA family. In terms of assembly, interacts with EnvZ.

Its subcellular location is the cell inner membrane. Modulates the activity of the EnvZ/OmpR two-component regulatory system, probably by directly modulating EnvZ enzymatic activity and increasing stability of phosphorylated OmpR. The protein is Modulator protein MzrA of Pantoea sp. (strain At-9b).